A 318-amino-acid polypeptide reads, in one-letter code: C1GALT1-specific chaperone 1 (318 aa).

Topologically, residues 1–6 (MLSESS) are cytoplasmic. The helical; Signal-anchor for type II membrane protein transmembrane segment at 7–26 (SFLKGVMLGSIFCALITMLG) threads the bilayer. At 27–318 (HIRIGHGSRM…FLPPNGSDND (292 aa)) the chain is on the lumenal side.

It belongs to the glycosyltransferase 31 family. Beta3-Gal-T subfamily. As to quaternary structure, associates with core 1 beta-3-galactosyltransferase (C1GALT1), probably not with the soluble active form.

The protein resides in the membrane. Functionally, probable chaperone required for the generation of 1 O-glycan Gal-beta1-3GalNAc-alpha1-Ser/Thr (T antigen), which is a precursor for many extended O-glycans in glycoproteins. Probably acts as a specific molecular chaperone assisting the folding/stability of core 1 beta-3-galactosyltransferase (C1GALT1). The polypeptide is C1GALT1-specific chaperone 1 (C1GALT1C1) (Bos taurus (Bovine)).